The chain runs to 353 residues: Photosystem II protein D1 (353 aa).

Residue threonine 2 is modified to N-acetylthreonine. Position 2 is a phosphothreonine (threonine 2). 3 helical membrane passes run 29 to 46 (YIGWFGVVMIPTLLTATS), 118 to 133 (HFFLGICCYMGREWEL), and 142 to 156 (WIAVAYSAPVAAATA). Histidine 118 serves as a coordination point for chlorophyll a. Position 126 (tyrosine 126) interacts with pheophytin a. The [CaMn4O5] cluster site is built by aspartate 170 and glutamate 189. The helical transmembrane segment at 197–218 (FHMLGVAGVFGGSLFSAMHGSL) threads the bilayer. Position 198 (histidine 198) interacts with chlorophyll a. Residues histidine 215 and 264–265 (SF) contribute to the a quinone site. Histidine 215 contacts Fe cation. A Fe cation-binding site is contributed by histidine 272. The helical transmembrane segment at 274–288 (FLAAWPVVGIWFTAL) threads the bilayer. [CaMn4O5] cluster-binding residues include histidine 332, glutamate 333, aspartate 342, and alanine 344. Positions 345-353 (SVEAPSVNG) are excised as a propeptide.

It belongs to the reaction center PufL/M/PsbA/D family. PSII is composed of 1 copy each of membrane proteins PsbA, PsbB, PsbC, PsbD, PsbE, PsbF, PsbH, PsbI, PsbJ, PsbK, PsbL, PsbM, PsbT, PsbX, PsbY, PsbZ, Psb30/Ycf12, at least 3 peripheral proteins of the oxygen-evolving complex and a large number of cofactors. It forms dimeric complexes. Requires The D1/D2 heterodimer binds P680, chlorophylls that are the primary electron donor of PSII, and subsequent electron acceptors. It shares a non-heme iron and each subunit binds pheophytin, quinone, additional chlorophylls, carotenoids and lipids. D1 provides most of the ligands for the Mn4-Ca-O5 cluster of the oxygen-evolving complex (OEC). There is also a Cl(-1) ion associated with D1 and D2, which is required for oxygen evolution. The PSII complex binds additional chlorophylls, carotenoids and specific lipids. as cofactor. In terms of processing, tyr-161 forms a radical intermediate that is referred to as redox-active TyrZ, YZ or Y-Z. Post-translationally, C-terminally processed by CTPA; processing is essential to allow assembly of the oxygen-evolving complex and thus photosynthetic growth.

It localises to the plastid. Its subcellular location is the chloroplast thylakoid membrane. The enzyme catalyses 2 a plastoquinone + 4 hnu + 2 H2O = 2 a plastoquinol + O2. In terms of biological role, photosystem II (PSII) is a light-driven water:plastoquinone oxidoreductase that uses light energy to abstract electrons from H(2)O, generating O(2) and a proton gradient subsequently used for ATP formation. It consists of a core antenna complex that captures photons, and an electron transfer chain that converts photonic excitation into a charge separation. The D1/D2 (PsbA/PsbD) reaction center heterodimer binds P680, the primary electron donor of PSII as well as several subsequent electron acceptors. In Chaetosphaeridium globosum (Charophycean green alga), this protein is Photosystem II protein D1.